The sequence spans 163 residues: uncharacterized protein (163 aa).

A helical transmembrane segment spans residues 11–31 (LSWFLLLVVVILIFFLLLSCL).

It localises to the membrane. This is an uncharacterized protein from Saccharomyces cerevisiae (strain ATCC 204508 / S288c) (Baker's yeast).